Reading from the N-terminus, the 179-residue chain is Inner membrane-spanning protein YciB (179 aa).

The next 5 membrane-spanning stretches (helical) occupy residues 22–42 (IYAATSALIVATAIVLIYSWV), 50–70 (MALITFVLVAVFGGLTIFFHN), 76–96 (WKVTVIYGLFAGALLISQWVM), 121–141 (LAWAVFFILCGLANIYIAFWL), and 149–169 (FKVFGLTALTLIFTLLSGVYI).

It belongs to the YciB family.

The protein localises to the cell inner membrane. In terms of biological role, plays a role in cell envelope biogenesis, maintenance of cell envelope integrity and membrane homeostasis. The protein is Inner membrane-spanning protein YciB of Citrobacter koseri (strain ATCC BAA-895 / CDC 4225-83 / SGSC4696).